The sequence spans 168 residues: GPI-anchored protein LLG1 (168 aa).

The signal sequence occupies residues 1-23; the sequence is MELLSRALFFFLLLSVLSSFSSS. Asn57 is a glycosylation site (N-linked (GlcNAc...) asparagine). Residue Asn144 is the site of GPI-anchor amidated asparagine attachment. The propeptide at 145-168 is removed in mature form; the sequence is AATTSSSRLWLTVSAALLVFVKLF.

In terms of assembly, interacts with FER. As to expression, expressed in pollen, pollen tubes, sporophytic pistil tissues, in the early stages of female gametophyte development, and in unfertilized, mature ovules. Expressed in roots, lateral roots, shoots, cotyledons, petioles, developing leaves and anther filaments.

The protein resides in the cell membrane. Component of the FER-regulated Rho GTPase signaling complex. Acts as a chaperone and coreceptor for FER. Required for localization of FER to the plasma membrane. The chain is GPI-anchored protein LLG1 from Arabidopsis thaliana (Mouse-ear cress).